The chain runs to 203 residues: Chaperonin-like RbcX protein 2, chloroplastic (203 aa).

The transit peptide at 1-78 (MVSAWFVVGS…RKSKKLLIVN (78 aa)) directs the protein to the chloroplast.

This sequence belongs to the RbcX family. In terms of assembly, homodimer. Interacts with rbcL, atpB and RBCS-1B.

The protein localises to the plastid. Its subcellular location is the chloroplast stroma. In terms of biological role, chaperone involved in RuBisCO assembly process. The sequence is that of Chaperonin-like RbcX protein 2, chloroplastic from Arabidopsis thaliana (Mouse-ear cress).